The chain runs to 652 residues: Leucine aminopeptidase 2 (652 aa).

A peptide contacts are provided by residues Gln165–Glu167 and Pro293–Glu298. His322 provides a ligand contact to Zn(2+). Glu323 acts as the Proton acceptor in catalysis. Zn(2+)-binding residues include His326 and Glu345. The active-site Proton donor is the Tyr411.

It belongs to the peptidase M1 family. It depends on Zn(2+) as a cofactor.

It is found in the cytoplasm. It localises to the nucleus. The enzyme catalyses an epoxide + H2O = an ethanediol. In terms of biological role, aminopeptidase that preferentially cleaves di- and tripeptides. Also has low epoxide hydrolase activity (in vitro). Can hydrolyze the epoxide leukotriene LTA(4) but it forms preferentially 5,6-dihydroxy-7,9,11,14-eicosatetraenoic acid rather than the cytokine leukotriene B(4) as the product compared to the homologous mammalian enzyme (in vitro). In Candida glabrata (strain ATCC 2001 / BCRC 20586 / JCM 3761 / NBRC 0622 / NRRL Y-65 / CBS 138) (Yeast), this protein is Leucine aminopeptidase 2.